The primary structure comprises 214 residues: Large ribosomal subunit protein uL4 (214 aa).

The disordered stretch occupies residues 43-83; sequence RRQAGTHKAKSRSEVNRTTKKSIKQKGSGGARHGSRNAPIF.

Belongs to the universal ribosomal protein uL4 family. Part of the 50S ribosomal subunit.

One of the primary rRNA binding proteins, this protein initially binds near the 5'-end of the 23S rRNA. It is important during the early stages of 50S assembly. It makes multiple contacts with different domains of the 23S rRNA in the assembled 50S subunit and ribosome. In terms of biological role, forms part of the polypeptide exit tunnel. The sequence is that of Large ribosomal subunit protein uL4 from Hyphomonas neptunium (strain ATCC 15444).